The chain runs to 294 residues: Bifunctional protein FolD (294 aa).

Residues 166–168, S191, and I232 each bind NADP(+); that span reads GRS.

The protein belongs to the tetrahydrofolate dehydrogenase/cyclohydrolase family. In terms of assembly, homodimer.

The catalysed reaction is (6R)-5,10-methylene-5,6,7,8-tetrahydrofolate + NADP(+) = (6R)-5,10-methenyltetrahydrofolate + NADPH. It carries out the reaction (6R)-5,10-methenyltetrahydrofolate + H2O = (6R)-10-formyltetrahydrofolate + H(+). Its pathway is one-carbon metabolism; tetrahydrofolate interconversion. Functionally, catalyzes the oxidation of 5,10-methylenetetrahydrofolate to 5,10-methenyltetrahydrofolate and then the hydrolysis of 5,10-methenyltetrahydrofolate to 10-formyltetrahydrofolate. This Nitrobacter hamburgensis (strain DSM 10229 / NCIMB 13809 / X14) protein is Bifunctional protein FolD.